An 851-amino-acid chain; its full sequence is Venom phosphodiesterase (851 aa).

The N-terminal stretch at methionine 1–glycine 23 is a signal peptide. 2 SMB domains span residues proline 30 to threonine 73 and glutamine 74 to serine 118. 16 cysteine pairs are disulfide-bonded: cysteine 34–cysteine 38, cysteine 34–cysteine 51, cysteine 38–cysteine 69, cysteine 49–cysteine 51, cysteine 49–cysteine 62, cysteine 55–cysteine 61, cysteine 62–cysteine 69, cysteine 78–cysteine 83, cysteine 78–cysteine 95, cysteine 83–cysteine 113, cysteine 93–cysteine 95, cysteine 93–cysteine 106, cysteine 99–cysteine 105, cysteine 106–cysteine 113, cysteine 124–cysteine 170, and cysteine 132–cysteine 344. Asparagine 39 carries an N-linked (GlcNAc...) asparagine glycan. The Cell attachment site signature appears at arginine 58–alanine 60. Aspartate 147 and threonine 185 together coordinate a divalent metal cation. The active-site AMP-threonine intermediate is threonine 185. 3 N-linked (GlcNAc...) asparagine glycosylation sites follow: asparagine 216, asparagine 259, and asparagine 270. Residue lysine 271 coordinates AMP. Positions 305, 309, 352, and 353 each coordinate a divalent metal cation. Histidine 309 provides a ligand contact to AMP. 6 disulfide bridges follow: cysteine 360/cysteine 457, cysteine 408/cysteine 793, cysteine 541/cysteine 599, cysteine 554/cysteine 654, cysteine 556/cysteine 639, and cysteine 762/cysteine 772. A glycan (N-linked (GlcNAc...) asparagine) is linked at asparagine 405. Histidine 462 serves as a coordination point for a divalent metal cation. Residues asparagine 512, asparagine 594, and asparagine 745 are each glycosylated (N-linked (GlcNAc...) asparagine).

It belongs to the nucleotide pyrophosphatase/phosphodiesterase family. In terms of assembly, monomer cleaved in two subunits; disulfide-linked. Is synthesized as a single-chain protein and is subsequently cleaved to form a two-subunit protein held together with disulfide bonds. The cofactor is a divalent metal cation. As to expression, expressed by venom gland.

The protein localises to the secreted. It catalyses the reaction ADP + H2O = AMP + phosphate + H(+). Hydrolyzes ADP with high activity. Shows weak or no activity on 5'-AMP, 5'-GMP, 3'-AMP, ATP, cAMP, and cGMP. Is devoid of monophosphatase and proteinase activities. Dose-dependently inhibits platelet aggregation induced by ADP (IC(50)=0.99 uM) and collagen (IC(50)=1.4 uM). This is Venom phosphodiesterase from Macrovipera lebetinus (Levantine viper).